Reading from the N-terminus, the 274-residue chain is MAHYFVGDVQGCFAELKRLLAEVDFNPSRDELWAVGDLVARGPDSLATLRYFQSLGDAGKTVLGNHDLHLLALHGKLKRDKPSDNLAPLLNAPDIASLIYWLRQQPLMRELPEHKVIMTHAGVPPQWSLDVLRQESQLVSQALKQGDYLDALISQMYSDTAERWDPSAIGLNRLRFCINALTRMRYLYVDGHLDFDCKQPPEDCNNPQLRPWFEFTSALRQSHTLVFGHWAALMGKVNDPKLKALDTGCCWGEYLTLWHLEKDQKITQKKLKKG.

The protein belongs to the Ap4A hydrolase family.

The enzyme catalyses P(1),P(4)-bis(5'-adenosyl) tetraphosphate + H2O = 2 ADP + 2 H(+). In terms of biological role, hydrolyzes diadenosine 5',5'''-P1,P4-tetraphosphate to yield ADP. The sequence is that of Bis(5'-nucleosyl)-tetraphosphatase, symmetrical from Shewanella sp. (strain MR-4).